Consider the following 453-residue polypeptide: tRNA modification GTPase MnmE (453 aa).

3 residues coordinate (6S)-5-formyl-5,6,7,8-tetrahydrofolate: R22, E79, and K119. The TrmE-type G domain maps to 215–376; the sequence is GMKVVIAGRP…LKQHLKSLMG (162 aa). N225 serves as a coordination point for K(+). Residues 225 to 230, 244 to 250, 269 to 272, and 334 to 337 each bind GTP; these read NAGKSS, TEIAGTT, DTAG, and NKAD. S229 is a Mg(2+) binding site. K(+) is bound by residues T244, I246, and T249. T250 lines the Mg(2+) pocket. Position 453 (K453) interacts with (6S)-5-formyl-5,6,7,8-tetrahydrofolate.

This sequence belongs to the TRAFAC class TrmE-Era-EngA-EngB-Septin-like GTPase superfamily. TrmE GTPase family. In terms of assembly, homodimer. Heterotetramer of two MnmE and two MnmG subunits. The cofactor is K(+).

It is found in the cytoplasm. Exhibits a very high intrinsic GTPase hydrolysis rate. Involved in the addition of a carboxymethylaminomethyl (cmnm) group at the wobble position (U34) of certain tRNAs, forming tRNA-cmnm(5)s(2)U34. The protein is tRNA modification GTPase MnmE of Shewanella baltica (strain OS155 / ATCC BAA-1091).